Reading from the N-terminus, the 106-residue chain is Iron-sulfur cluster assembly protein CyaY (106 aa).

The protein belongs to the frataxin family.

Functionally, involved in iron-sulfur (Fe-S) cluster assembly. May act as a regulator of Fe-S biogenesis. The polypeptide is Iron-sulfur cluster assembly protein CyaY (Salmonella arizonae (strain ATCC BAA-731 / CDC346-86 / RSK2980)).